A 744-amino-acid chain; its full sequence is Polyribonucleotide nucleotidyltransferase (744 aa).

Mg(2+) contacts are provided by D487 and D493. A KH domain is found at 554–613 (PSTTTLKVDKDKIRDIIGPGGKVIKEICETSGAKIDISDDGTVSIYASDKDKLKVALDKV). The S1 motif domain occupies 623 to 691 (GEVFNGTVMK…NKGKAKLTIK (69 aa)). The disordered stretch occupies residues 691-744 (KNAEKDKSSANPKPKNSPKEHQEPEKRDNGKKRAWNEDNNAETTEVVTERKYFS). Residues 707–718 (SPKEHQEPEKRD) show a composition bias toward basic and acidic residues. Residues 727-736 (EDNNAETTEV) show a composition bias toward polar residues.

It belongs to the polyribonucleotide nucleotidyltransferase family. Requires Mg(2+) as cofactor.

The protein resides in the cytoplasm. The catalysed reaction is RNA(n+1) + phosphate = RNA(n) + a ribonucleoside 5'-diphosphate. Involved in mRNA degradation. Catalyzes the phosphorolysis of single-stranded polyribonucleotides processively in the 3'- to 5'-direction. In Rickettsia bellii (strain OSU 85-389), this protein is Polyribonucleotide nucleotidyltransferase.